A 928-amino-acid chain; its full sequence is Periplasmic nitrate reductase (928 aa).

Residues methionine 1–alanine 33 constitute a signal peptide (tat-type signal). Residues tryptophan 40–aspartate 96 enclose the 4Fe-4S Mo/W bis-MGD-type domain. 4 residues coordinate [4Fe-4S] cluster: cysteine 47, cysteine 50, cysteine 54, and cysteine 82. Mo-bis(molybdopterin guanine dinucleotide)-binding positions include lysine 84, glutamine 152, asparagine 177, cysteine 181, tryptophan 214–methionine 221, glutamine 265–aspartate 267, methionine 422, glutamine 426, asparagine 532, serine 557–aspartate 558, lysine 580, aspartate 607, and threonine 818–serine 827. Tryptophan 894 contributes to the substrate binding site. Mo-bis(molybdopterin guanine dinucleotide) contacts are provided by asparagine 902 and lysine 919.

Belongs to the prokaryotic molybdopterin-containing oxidoreductase family. NasA/NapA/NarB subfamily. Component of the periplasmic nitrate reductase NapAB complex composed of NapA and NapB. [4Fe-4S] cluster serves as cofactor. It depends on Mo-bis(molybdopterin guanine dinucleotide) as a cofactor. Post-translationally, predicted to be exported by the Tat system. The position of the signal peptide cleavage has not been experimentally proven.

It is found in the periplasm. It catalyses the reaction 2 Fe(II)-[cytochrome] + nitrate + 2 H(+) = 2 Fe(III)-[cytochrome] + nitrite + H2O. In terms of biological role, catalytic subunit of the periplasmic nitrate reductase complex NapAB. Receives electrons from NapB and catalyzes the reduction of nitrate to nitrite. The polypeptide is Periplasmic nitrate reductase (Wolinella succinogenes (strain ATCC 29543 / DSM 1740 / CCUG 13145 / JCM 31913 / LMG 7466 / NCTC 11488 / FDC 602W) (Vibrio succinogenes)).